Consider the following 215-residue polypeptide: Cytochrome b6 (215 aa).

A helical membrane pass occupies residues 32-52; that stretch reads IFYCLGGITLTCFLVQVATGF. Cysteine 35 serves as a coordination point for heme c. Heme b-binding residues include histidine 86 and histidine 100. The next 3 membrane-spanning stretches (helical) occupy residues 90 to 110, 116 to 136, and 186 to 206; these read ASMM…TGGF, LTWV…VTGY, and LHTF…FLMI. Heme b is bound by residues histidine 187 and histidine 202.

Belongs to the cytochrome b family. PetB subfamily. As to quaternary structure, the 4 large subunits of the cytochrome b6-f complex are cytochrome b6, subunit IV (17 kDa polypeptide, PetD), cytochrome f and the Rieske protein, while the 4 small subunits are PetG, PetL, PetM and PetN. The complex functions as a dimer. Requires heme b as cofactor. It depends on heme c as a cofactor.

Its subcellular location is the plastid. The protein resides in the chloroplast thylakoid membrane. Its function is as follows. Component of the cytochrome b6-f complex, which mediates electron transfer between photosystem II (PSII) and photosystem I (PSI), cyclic electron flow around PSI, and state transitions. In Welwitschia mirabilis (Tree tumbo), this protein is Cytochrome b6.